A 440-amino-acid polypeptide reads, in one-letter code: Cytochrome P450 monooygenase 1 (440 aa).

Cysteine 381 is a binding site for heme.

This sequence belongs to the cytochrome P450 family. Heme is required as a cofactor.

It participates in plant hormone biosynthesis; gibberellin biosynthesis. Its function is as follows. GA14 synthase; part of the gene cluster that mediates the biosynthesis of gibberellins (GAs), diterpenoids that may provide a selective advantage during infection of the preferred host plant, rice. Gibberellins (GAs) are diterpenoids and are synthesized via the mevalonate pathway. Biosynthesis of the major metabolite GA3 (gibberellic acid) from geranylgeranyl diphosphate (GGPP) requires 13 steps. The GGPP produced by the geranylgeranyl diphosphate synthase GGS2 is converted to ent-kaurene via ent-copalyldiphosphate in a two-step cyclization reaction performed by the bifunctional ent-copalyl diphosphate synthase/ent-kaurene synthase enzyme (CPS/KS). Ent-Kaurene is metabolized to GAs by a series of oxidation reactions catalyzed by cytochrome P450 monooxygenases. Cytochrome P450 monooxygenase P450-4 is an ent-kaurene oxidase that catalyzes the three oxidation steps between ent-kaurene and ent-kaurenoic acid. The highly multifunctional cytochrome P450 monooxygenase P450-1 then catalyzes four steps involving oxidation at two carbon atoms, in the main pathway from ent-kaurenoic acid to GA14 via GA12-aldehyde as well as producing kaurenolides and fujenoic acids as by-products. The cytochrome P450 monooxygenase P450-2 then converts GA14 to GA4 by removal of C-20. GA4 is further converted to GA7 by the GA4 desaturase DES via 1,2-desaturation before cytochrome P450 monooxygenase P450-3, a 13-hydroxylase, hydroxylates GA7 to GA3, the final product of the GA-biosynthetic pathway. In Gibberella fujikuroi (strain CBS 195.34 / IMI 58289 / NRRL A-6831) (Bakanae and foot rot disease fungus), this protein is Cytochrome P450 monooygenase 1.